The chain runs to 121 residues: UPF0102 protein Mvan_2202 (121 aa).

The protein belongs to the UPF0102 family.

In Mycolicibacterium vanbaalenii (strain DSM 7251 / JCM 13017 / BCRC 16820 / KCTC 9966 / NRRL B-24157 / PYR-1) (Mycobacterium vanbaalenii), this protein is UPF0102 protein Mvan_2202.